A 261-amino-acid chain; its full sequence is Cytochrome c oxidase subunit 3 (261 aa).

Residues Met1 to Pro15 lie on the Mitochondrial matrix side of the membrane. Residues Trp16–Trp34 traverse the membrane as a helical segment. The Mitochondrial intermembrane segment spans residues Phe35–Thr40. Residues Thr41–Thr66 form a helical membrane-spanning segment. Residues Phe67 to Thr72 lie on the Mitochondrial matrix side of the membrane. A helical membrane pass occupies residues Pro73–Ser105. Over Leu106–Glu128 the chain is Mitochondrial intermembrane. The helical transmembrane segment at Val129–Met152 threads the bilayer. Topologically, residues Glu153–Asn155 are mitochondrial matrix. The chain crosses the membrane as a helical span at residues Arg156–Glu183. Residues Ala184–Asp190 are Mitochondrial intermembrane-facing. A helical transmembrane segment spans residues Gly191–Leu223. Residues Lys224–His232 lie on the Mitochondrial matrix side of the membrane. The helical transmembrane segment at Phe233 to Ile256 threads the bilayer. Topologically, residues Tyr257–Ser261 are mitochondrial intermembrane.

Belongs to the cytochrome c oxidase subunit 3 family. In terms of assembly, component of the cytochrome c oxidase (complex IV, CIV), a multisubunit enzyme composed of 14 subunits. The complex is composed of a catalytic core of 3 subunits MT-CO1, MT-CO2 and MT-CO3, encoded in the mitochondrial DNA, and 11 supernumerary subunits COX4I, COX5A, COX5B, COX6A, COX6B, COX6C, COX7A, COX7B, COX7C, COX8 and NDUFA4, which are encoded in the nuclear genome. The complex exists as a monomer or a dimer and forms supercomplexes (SCs) in the inner mitochondrial membrane with NADH-ubiquinone oxidoreductase (complex I, CI) and ubiquinol-cytochrome c oxidoreductase (cytochrome b-c1 complex, complex III, CIII), resulting in different assemblies (supercomplex SCI(1)III(2)IV(1) and megacomplex MCI(2)III(2)IV(2)).

The protein resides in the mitochondrion inner membrane. The catalysed reaction is 4 Fe(II)-[cytochrome c] + O2 + 8 H(+)(in) = 4 Fe(III)-[cytochrome c] + 2 H2O + 4 H(+)(out). Its function is as follows. Component of the cytochrome c oxidase, the last enzyme in the mitochondrial electron transport chain which drives oxidative phosphorylation. The respiratory chain contains 3 multisubunit complexes succinate dehydrogenase (complex II, CII), ubiquinol-cytochrome c oxidoreductase (cytochrome b-c1 complex, complex III, CIII) and cytochrome c oxidase (complex IV, CIV), that cooperate to transfer electrons derived from NADH and succinate to molecular oxygen, creating an electrochemical gradient over the inner membrane that drives transmembrane transport and the ATP synthase. Cytochrome c oxidase is the component of the respiratory chain that catalyzes the reduction of oxygen to water. Electrons originating from reduced cytochrome c in the intermembrane space (IMS) are transferred via the dinuclear copper A center (CU(A)) of subunit 2 and heme A of subunit 1 to the active site in subunit 1, a binuclear center (BNC) formed by heme A3 and copper B (CU(B)). The BNC reduces molecular oxygen to 2 water molecules using 4 electrons from cytochrome c in the IMS and 4 protons from the mitochondrial matrix. In Gazella spekei (Speke's gazelle), this protein is Cytochrome c oxidase subunit 3 (MT-CO3).